The sequence spans 546 residues: 2-isopropylmalate synthase (546 aa).

Residues 8 to 271 form the Pyruvate carboxyltransferase domain; the sequence is ILIFDTTLRD…NSFFGRSSDS (264 aa). Positions 17, 208, 210, and 244 each coordinate Mn(2+). The regulatory domain stretch occupies residues 408-546; sequence QLSHVQVSCG…KNKVLSNPKK (139 aa).

This sequence belongs to the alpha-IPM synthase/homocitrate synthase family. LeuA type 1 subfamily. In terms of assembly, homodimer. Mn(2+) serves as cofactor.

It localises to the cytoplasm. The enzyme catalyses 3-methyl-2-oxobutanoate + acetyl-CoA + H2O = (2S)-2-isopropylmalate + CoA + H(+). It participates in amino-acid biosynthesis; L-leucine biosynthesis; L-leucine from 3-methyl-2-oxobutanoate: step 1/4. Catalyzes the condensation of the acetyl group of acetyl-CoA with 3-methyl-2-oxobutanoate (2-ketoisovalerate) to form 3-carboxy-3-hydroxy-4-methylpentanoate (2-isopropylmalate). This is 2-isopropylmalate synthase from Prochlorococcus marinus subsp. pastoris (strain CCMP1986 / NIES-2087 / MED4).